We begin with the raw amino-acid sequence, 151 residues long: Large ribosomal subunit protein bL9 (151 aa).

Belongs to the bacterial ribosomal protein bL9 family.

Functionally, binds to the 23S rRNA. The polypeptide is Large ribosomal subunit protein bL9 (Dehalococcoides mccartyi (strain ATCC BAA-2266 / KCTC 15142 / 195) (Dehalococcoides ethenogenes (strain 195))).